The sequence spans 280 residues: UPF0750 membrane protein YitT (280 aa).

The next 4 helical transmembrane spans lie at 9–29 (LLIVIIGALLNAAGLNLFLIP), 54–74 (FYISTGTLLFLLNIPVGILGW), 80–100 (SFTVYSILSVALTTLFMGILP), and 151–171 (VGTYFFILNGIIILTAGLLQG).

Belongs to the UPF0750 family.

The protein localises to the cell membrane. This is UPF0750 membrane protein YitT (yitT) from Bacillus subtilis (strain 168).